Reading from the N-terminus, the 62-residue chain is DNA-directed RNA polymerase subunit Rpo10 (62 aa).

Positions 6, 9, 43, and 44 each coordinate Zn(2+).

This sequence belongs to the archaeal Rpo10/eukaryotic RPB10 RNA polymerase subunit family. As to quaternary structure, part of the RNA polymerase complex. Requires Zn(2+) as cofactor.

It is found in the cytoplasm. It catalyses the reaction RNA(n) + a ribonucleoside 5'-triphosphate = RNA(n+1) + diphosphate. DNA-dependent RNA polymerase (RNAP) catalyzes the transcription of DNA into RNA using the four ribonucleoside triphosphates as substrates. In Methanosarcina barkeri (strain Fusaro / DSM 804), this protein is DNA-directed RNA polymerase subunit Rpo10.